Consider the following 210-residue polypeptide: Potassium-transporting ATPase KdpC subunit (210 aa).

The helical transmembrane segment at 13–33 threads the bilayer; sequence LVTLVLLLVCGLAYPLILTGI.

It belongs to the KdpC family. The system is composed of three essential subunits: KdpA, KdpB and KdpC.

Its subcellular location is the cell membrane. Part of the high-affinity ATP-driven potassium transport (or Kdp) system, which catalyzes the hydrolysis of ATP coupled with the electrogenic transport of potassium into the cytoplasm. This subunit acts as a catalytic chaperone that increases the ATP-binding affinity of the ATP-hydrolyzing subunit KdpB by the formation of a transient KdpB/KdpC/ATP ternary complex. The sequence is that of Potassium-transporting ATPase KdpC subunit from Clostridium kluyveri (strain ATCC 8527 / DSM 555 / NBRC 12016 / NCIMB 10680 / K1).